The primary structure comprises 273 residues: MTDQIPVVVAGALGRMGAEVIKAVHTAGDCQLVGAIDTCPGREGEDVGLALGLGELEVALTQDFEGALCLASQQHPGAVLVDFTHPKVVYEHTRAAIAYGVTPVIGTTGLAPEQLQELASFAAKASMGGAVIPNFSVGMVLLQQAAAAAARFYDHAELVELHHNRKADAPSGTCIKTAELMEELGKQFNAQEVEEHETLEGSRGGLRPSGLRLHSIRLPGLVAHQEVQFGGAGERYVLRHDTFDRAAYMPGVLLTVRKVRQLGALVYGLERLL.

NAD(+)-binding positions include Gly-11 to Met-16 and Gly-106 to Thr-108. His-162 serves as the catalytic Proton donor/acceptor. His-163 is a binding site for (S)-2,3,4,5-tetrahydrodipicolinate. Lys-166 serves as the catalytic Proton donor. Gly-172 to Thr-173 contributes to the (S)-2,3,4,5-tetrahydrodipicolinate binding site.

Belongs to the DapB family.

The protein localises to the cytoplasm. The enzyme catalyses (S)-2,3,4,5-tetrahydrodipicolinate + NAD(+) + H2O = (2S,4S)-4-hydroxy-2,3,4,5-tetrahydrodipicolinate + NADH + H(+). The catalysed reaction is (S)-2,3,4,5-tetrahydrodipicolinate + NADP(+) + H2O = (2S,4S)-4-hydroxy-2,3,4,5-tetrahydrodipicolinate + NADPH + H(+). The protein operates within amino-acid biosynthesis; L-lysine biosynthesis via DAP pathway; (S)-tetrahydrodipicolinate from L-aspartate: step 4/4. In terms of biological role, catalyzes the conversion of 4-hydroxy-tetrahydrodipicolinate (HTPA) to tetrahydrodipicolinate. The protein is 4-hydroxy-tetrahydrodipicolinate reductase of Synechococcus sp. (strain RCC307).